The primary structure comprises 89 residues: Large ribosomal subunit protein eL43 (89 aa).

Residues cysteine 38, cysteine 41, cysteine 56, and cysteine 59 each coordinate Zn(2+). The segment at 38-59 (CPSCDRPGVKRESRGIWKCRKC) adopts a C4-type zinc-finger fold.

The protein belongs to the eukaryotic ribosomal protein eL43 family. Putative zinc-binding subfamily. In terms of assembly, part of the 50S ribosomal subunit. Requires Zn(2+) as cofactor.

In terms of biological role, binds to the 23S rRNA. The protein is Large ribosomal subunit protein eL43 of Methanothermobacter thermautotrophicus (strain ATCC 29096 / DSM 1053 / JCM 10044 / NBRC 100330 / Delta H) (Methanobacterium thermoautotrophicum).